The primary structure comprises 618 residues: DNA mismatch repair protein MutL (618 aa).

This sequence belongs to the DNA mismatch repair MutL/HexB family.

This protein is involved in the repair of mismatches in DNA. It is required for dam-dependent methyl-directed DNA mismatch repair. May act as a 'molecular matchmaker', a protein that promotes the formation of a stable complex between two or more DNA-binding proteins in an ATP-dependent manner without itself being part of a final effector complex. The chain is DNA mismatch repair protein MutL from Bradyrhizobium sp. (strain BTAi1 / ATCC BAA-1182).